The primary structure comprises 201 residues: Holliday junction branch migration complex subunit RuvA (201 aa).

Positions 1–64 are domain I; sequence MIGRLRGTLA…EDAHLLYGFA (64 aa). Residues 65 to 143 form a domain II region; that stretch reads EKRERELFRE…AWENMPTIAP (79 aa). A flexible linker region spans residues 144–152; sequence LVMEPRASA. The segment at 153 to 201 is domain III; it reads TVSSAEADAVSALIALGFKPQEASRAVAAVPGEDLSSEEMIRQALKGMV.

Belongs to the RuvA family. In terms of assembly, homotetramer. Forms an RuvA(8)-RuvB(12)-Holliday junction (HJ) complex. HJ DNA is sandwiched between 2 RuvA tetramers; dsDNA enters through RuvA and exits via RuvB. An RuvB hexamer assembles on each DNA strand where it exits the tetramer. Each RuvB hexamer is contacted by two RuvA subunits (via domain III) on 2 adjacent RuvB subunits; this complex drives branch migration. In the full resolvosome a probable DNA-RuvA(4)-RuvB(12)-RuvC(2) complex forms which resolves the HJ.

The protein resides in the cytoplasm. Its function is as follows. The RuvA-RuvB-RuvC complex processes Holliday junction (HJ) DNA during genetic recombination and DNA repair, while the RuvA-RuvB complex plays an important role in the rescue of blocked DNA replication forks via replication fork reversal (RFR). RuvA specifically binds to HJ cruciform DNA, conferring on it an open structure. The RuvB hexamer acts as an ATP-dependent pump, pulling dsDNA into and through the RuvAB complex. HJ branch migration allows RuvC to scan DNA until it finds its consensus sequence, where it cleaves and resolves the cruciform DNA. The sequence is that of Holliday junction branch migration complex subunit RuvA from Pseudomonas aeruginosa (strain LESB58).